A 425-amino-acid polypeptide reads, in one-letter code: Septin-11 (425 aa).

A2 bears the N-acetylalanine mark. The residue at position 9 (S9) is a Phosphoserine. The 267-residue stretch at 38 to 304 folds into the Septin-type G domain; that stretch reads QGFCFNILCV…ELYRRCKLEE (267 aa). Residues 48–55 are G1 motif; that stretch reads GETGIGKS. GTP contacts are provided by residues 48 to 55, G103, 184 to 192, G238, and R253; these read GETGIGKS and KADTIAKNE. The G3 motif stretch occupies residues 100–103; that stretch reads DTVG. Residues 183–186 are G4 motif; the sequence is AKAD. Residues 320–410 are a coiled coil; sequence QETYEAKRNE…AAQLLQSQAQ (91 aa). Residues 399-425 are disordered; it reads KAAAQLLQSQAQQSGAQQTKKDKDKKN. Residues 401-416 are compositionally biased toward low complexity; that stretch reads AAQLLQSQAQQSGAQQ.

It belongs to the TRAFAC class TrmE-Era-EngA-EngB-Septin-like GTPase superfamily. Septin GTPase family. Septins polymerize into heterooligomeric protein complexes that form filaments, and can associate with cellular membranes, actin filaments and microtubules. Forms homooligomers. GTPase activity is required for filament formation. Interacts with SEPTIN7, SEPTIN9 and SEPTIN12.

It is found in the cytoplasm. The protein localises to the cytoskeleton. The protein resides in the synapse. Its subcellular location is the cell projection. It localises to the dendritic spine. It is found in the axon. In terms of biological role, filament-forming cytoskeletal GTPase. May play a role in cytokinesis (Potential). May play a role in the cytoarchitecture of neurons, including dendritic arborization and dendritic spines, and in GABAergic synaptic connectivity. The polypeptide is Septin-11 (Bos taurus (Bovine)).